Here is a 585-residue protein sequence, read N- to C-terminus: MIKTQESLTLEDVAVEFSWEEWQLLDTAQKNLYRDVMVENYNHLVSLGYQTSKPDVLSKLAHGQEPWTTDAKIQNKNCPGIGKVDSHLQEHSPNQRLLKSVQQCNGQNTLRNIVHLSKTHFPIVQNHDTFDLYRKNLKSSLSLINQKRRHGINNPVEFIGGEKTLLHGKHERTHTKTRFSENAKCIHTKFQVFKHQRTQKIEKPHACIECEQTFLRKSQLIYHENICIQENPGSGQCEKLSRSVLFTKHLKTNTTDKICIPNEYRKGSTVKSSLITHQQTHTEEKSYMCSECGKGFTMKRYLIAHQRTHSGEKPYVCKECGKGFTVKSNLIVHQRTHTGEKPYICSECGKGFTMKRYLVVHQRTHTGEKPYMCSECGKGFTVKSNLIVHQRSHTGEKSYICSECGKGFTVKRTLVIHQRTHTGEKSYICNECGKGFTTKRTLIIHQRTHTGEKPYECNECGKAFSQKICLIQHERCHTGKTPFVCTECGKSYSHKYGLITHQRIHTGEKPYECNECGKAFTTKSVLNVHQRTHTGERPYGCSDCEKAFSHLSNLVKHKKMHTREMGRISQVENSCNGESQLLPYK.

In terms of domain architecture, KRAB spans 8–79 (LTLEDVAVEF…DAKIQNKNCP (72 aa)). The segment at 205–227 (HACIECEQTFLRKSQLIYHENIC) adopts a C2H2-type 1; atypical zinc-finger fold. Residues 257-281 (KICIPNEYRKGSTVKSSLITHQQTH) form a C2H2-type 2; degenerate zinc finger. 10 consecutive C2H2-type zinc fingers follow at residues 287–309 (YMCSECGKGFTMKRYLIAHQRTH), 315–337 (YVCKECGKGFTVKSNLIVHQRTH), 343–365 (YICSECGKGFTMKRYLVVHQRTH), 371–393 (YMCSECGKGFTVKSNLIVHQRSH), 399–421 (YICSECGKGFTVKRTLVIHQRTH), 427–449 (YICNECGKGFTTKRTLIIHQRTH), 455–477 (YECNECGKAFSQKICLIQHERCH), 483–505 (FVCTECGKSYSHKYGLITHQRIH), 511–533 (YECNECGKAFTTKSVLNVHQRTH), and 539–561 (YGCSDCEKAFSHLSNLVKHKKMH).

This sequence belongs to the krueppel C2H2-type zinc-finger protein family.

The protein localises to the nucleus. Its function is as follows. May be involved in transcriptional regulation. The sequence is that of Zinc finger protein 614 (ZNF614) from Homo sapiens (Human).